The sequence spans 435 residues: GTPase Der (435 aa).

2 EngA-type G domains span residues 4-167 (KIVA…SKND) and 175-350 (TKIA…QSLS). GTP contacts are provided by residues 10 to 17 (GRPNVGKS), 57 to 61 (DTGGI), 119 to 122 (NKYD), 181 to 188 (GRPNVGKS), 228 to 232 (DTAGI), and 293 to 296 (NKWD). Positions 351-435 (VKVKTYVLNE…PINLIFRERK (85 aa)) constitute a KH-like domain.

Belongs to the TRAFAC class TrmE-Era-EngA-EngB-Septin-like GTPase superfamily. EngA (Der) GTPase family. As to quaternary structure, associates with the 50S ribosomal subunit.

Functionally, GTPase that plays an essential role in the late steps of ribosome biogenesis. In Mycoplasma mycoides subsp. mycoides SC (strain CCUG 32753 / NCTC 10114 / PG1), this protein is GTPase Der.